The chain runs to 833 residues: Multiphosphoryl transfer protein 2 (833 aa).

The 90-residue stretch at 2–91 (ALIVEFICEL…QWLRDEFPHC (90 aa)) folds into the HPr domain. The active-site Tele-phosphohistidine intermediate; for HPr activity is the His16. His16 is subject to Phosphohistidine; by EI. The interval 143–653 (LGNLPAAKGV…AAKARMAQLD (511 aa)) is PTS EI. Catalysis depends on His301, which acts as the Tele-phosphohistidine intermediate; for PTS EI activity. His301 is modified (phosphohistidine; by autocatalysis). Residues Arg408 and Arg444 each coordinate phosphoenolpyruvate. 2 residues coordinate Mg(2+): Glu543 and Asp567. Residues 566–567 (ND) and Arg577 each bind phosphoenolpyruvate. Cys614 acts as the Proton donor; for EI activity in catalysis. Positions 688–830 (PLVTAECITL…DAIASLLQHE (143 aa)) constitute a PTS EIIA type-2 domain. The active-site Tele-phosphohistidine intermediate; for PTS EIIA activity is His750. His750 is subject to Phosphohistidine; by HPr.

This sequence belongs to the PEP-utilizing enzyme family. Mg(2+) serves as cofactor.

It localises to the cytoplasm. The enzyme catalyses L-histidyl-[protein] + phosphoenolpyruvate = N(pros)-phospho-L-histidyl-[protein] + pyruvate. It carries out the reaction D-fructose(out) + N(pros)-phospho-L-histidyl-[protein] = D-fructose 1-phosphate(in) + L-histidyl-[protein]. Multifunctional protein that includes general (non sugar-specific) and sugar-specific components of the phosphoenolpyruvate-dependent sugar phosphotransferase system (sugar PTS). This major carbohydrate active transport system catalyzes the phosphorylation of incoming sugar substrates concomitantly with their translocation across the cell membrane. The enzyme II FrwABC PTS system is involved in fructose transport. The protein is Multiphosphoryl transfer protein 2 of Escherichia coli (strain K12).